Here is a 144-residue protein sequence, read N- to C-terminus: MAKRSIYFCGSIRGGRNDAQFYAKIIQHLKQYGDILTEHVGHCGPEEEGLDDKTIHDRDLAWLLQSDVIVAEVTQPSLGVGYELGRAIAADKLVLCLFRPDSGRRLSGMIRGAINSVNFFVEDYHQDEYASKIDQFFTVRVTRP.

Residues 7 to 13, Tyr22, His39, Glu83, and 107 to 109 contribute to the substrate site; these read YFCGSIR and SGM.

The protein belongs to the 2'-deoxynucleoside 5'-phosphate N-hydrolase 1 family. As to quaternary structure, monomer and homodimer.

The protein localises to the cytoplasm. It localises to the nucleus. It carries out the reaction a pyrimidine 2'-deoxyribonucleoside 5'-phosphate + H2O = a pyrimidine nucleobase + 2-deoxy-D-ribose 5-phosphate. The catalysed reaction is a purine 2'-deoxyribonucleoside 5'-phosphate + H2O = a purine nucleobase + 2-deoxy-D-ribose 5-phosphate. Catalyzes the cleavage of the N-glycosidic bond of deoxyribonucleoside 5'-monophosphates to yield deoxyribose 5-phosphate and a purine or pyrimidine base. The polypeptide is Putative 2'-deoxynucleoside 5'-phosphate N-hydrolase 1 (Trichoplax adhaerens (Trichoplax reptans)).